Reading from the N-terminus, the 126-residue chain is MKRFRIVAPLALMSLALAACETTGPGSGNAPIIAHTPAGIEGSWVDPNGIASSFNGGIFETRTTDTNEKLAEGNYLYLSPQLVEINMRSIVRGTTSKVNCALVSPTQLNCTSSAGSRFSLTRRNAG.

The signal sequence occupies residues 1–19 (MKRFRIVAPLALMSLALAA). A lipid anchor (N-palmitoyl cysteine) is attached at Cys20. Residue Cys20 is the site of S-diacylglycerol cysteine attachment.

The protein belongs to the rhizobiaceae omp10 lipoprotein family.

It is found in the cell outer membrane. The protein is Outer membrane lipoprotein omp10 (omp10) of Brucella abortus biovar 1 (strain 9-941).